The sequence spans 328 residues: UPF0285 protein MJ1370 (328 aa).

It belongs to the UPF0285 family.

The protein is UPF0285 protein MJ1370 of Methanocaldococcus jannaschii (strain ATCC 43067 / DSM 2661 / JAL-1 / JCM 10045 / NBRC 100440) (Methanococcus jannaschii).